The sequence spans 1452 residues: Pleiotropic drug resistance protein 1 (1452 aa).

The 274-residue stretch at 152-425 (LNYLHILPNR…FEYMGFICPE (274 aa)) folds into the ABC transporter 1 domain. 185 to 192 (GPPSSGKT) is a binding site for ATP. The region spanning 504-716 (LLKACTAREY…AQNAIAVNEF (213 aa)) is the ABC transmembrane type-2 1 domain. 7 consecutive transmembrane segments (helical) span residues 521–541 (FVYI…MTLF), 554–574 (GAVF…NGFS), 609–629 (IPIT…VIGF), 640–660 (LLLL…MGAL), 664–684 (IIVA…MGGF), 694–714 (WWIW…IAVN), and 753–773 (IGAG…AVAL). A disordered region spans residues 808–830 (LGKSSSEKGNDVRRSASSRSMSS). Basic and acidic residues predominate over residues 812 to 821 (SSEKGNDVRR). One can recognise an ABC transporter 2 domain in the interval 855–1107 (ITFDDIRYAV…HLIKYFEGID (253 aa)). 900–907 (GVSGAGKT) contacts ATP. The ABC transmembrane type-2 2 domain occupies 1180–1394 (TQCMACFWKQ…TLYGLIASQF (215 aa)). A run of 7 helical transmembrane segments spans residues 1199 to 1219 (YTAV…TIFW), 1239 to 1259 (YIAV…VIAI), 1287 to 1307 (LPYL…MIGF), 1314 to 1334 (FFWY…YGMM), 1344 to 1364 (IAAI…GFIV), 1375 to 1395 (WYYY…SQFG), and 1421 to 1441 (FVGY…FIFA).

Belongs to the ABC transporter superfamily. ABCG family. PDR (TC 3.A.1.205) subfamily. In terms of tissue distribution, expressed in root hypodermal passage cells. Expressed in stem tissues, particularly the vasculature and nodes adjacent to leaf axils.

It is found in the cell membrane. Functionally, cellular strigolactone (SL) transporter required for the exudation of SL from the root to the soil. The presence of SL in the vicinity of the roots is required for development of symbiotic interactions with arbuscular mycorrhizal fungi (AMF). Transports SL in the above ground tissues and is required for the control of shoot branching. SL regulates plant shoot architecture by inhibiting the outgrowth of axillary buds. Involved in the regulation of shootward and outward directional strigolactone transport in roots. Due to its polar localization in root cells, mediates directional shootward strigolactone transport, as well as localized outward directional transport for exudation to the soil. This chain is Pleiotropic drug resistance protein 1, found in Petunia axillaris (Large white petunia).